A 147-amino-acid chain; its full sequence is Receptor activity-modifying protein 3 (147 aa).

Positions 1-22 (MKTPAQRLHLLPLLLLLCGECA) are cleaved as a signal peptide. At 23-112 (QVCGCNETGM…CTVDRTHWED (90 aa)) the chain is on the extracellular side. Residues N28, N57, N70, and N102 are each glycosylated (N-linked (GlcNAc...) asparagine). Intrachain disulfides connect C39-C71 and C56-C103. Residues 113 to 137 (PPDEVLIPLIAVPVVLTVAMAGLVV) traverse the membrane as a helical segment. Over 138-147 (WRSKHTDRLL) the chain is Cytoplasmic.

This sequence belongs to the RAMP family. Heterodimer of CALCRL and RAMP3; interaction induces allosteric modulation of CALCRL function and ligand specificity for adrenomedullin/ADM and intermedin/ADM2. Heterodimer of CALCR and RAMP3; interaction form the receptor complex AMYR3 for amylin/IAPP. Interacts with GPER1. Expressed predominantly in the testis, embryonic and adult brain and in kidney.

The protein localises to the cell membrane. The protein resides in the membrane. Its function is as follows. Accessory protein that interacts with and modulates the function of G-protein coupled receptors including calcitonin gene-related peptide type 1 receptor (CALCRL), calcitonin receptor (CALCR) and G-protein coupled estrogen receptor 1 (GPER1). Required for the transport of CALCRL and GPER1 receptors to the plasma membrane. Plays a role in cardioprotection by reducing cardiac hypertrophy and perivascular fibrosis in a GPER1-dependent manner. Together with CALCRL, form a receptor complex for adrenomedullin/ADM and intermedin/ADM2. Together with CALCR, act as a receptor complex for amylin/IAPP. This Mus musculus (Mouse) protein is Receptor activity-modifying protein 3.